Consider the following 506-residue polypeptide: 5'-3' exonuclease PLD4 (506 aa).

Residues 31-51 (LQVLGALAVLWLGSVALICLL) form a helical membrane-spanning segment. A disulfide bridge connects residues Cys94 and Cys250. N-linked (GlcNAc...) asparagine glycosylation is found at Asn150 and Asn171. The PLD phosphodiesterase 1 domain occupies 209–236 (TRGVLHSKFWVVDGRHIYMGSANMDWRS). Residue His214 is the Proton donor of the active site. Residues Lys216 and Asp221 contribute to the active site. N-linked (GlcNAc...) asparagine glycans are attached at residues Asn249, Asn281, Asn403, Asn417, and Asn427. Residues Cys379 and Cys502 are joined by a disulfide bond. The PLD phosphodiesterase 2 domain maps to 423–449 (FSRVNHSKFMVTEKAAYIGTSNWSEDY). The Nucleophile role is filled by His428. A glycan (N-linked (GlcNAc...) asparagine) is linked at Asn444.

Belongs to the phospholipase D family. Homodimer. Highly N-glycosylated. As to expression, expressed in plasmacytoid dendritic cells and monocytes (at protein level).

The protein resides in the endoplasmic reticulum membrane. Its subcellular location is the golgi apparatus. The protein localises to the trans-Golgi network membrane. It localises to the nucleus. It is found in the early endosome. The protein resides in the cytoplasmic vesicle. Its subcellular location is the phagosome. The protein localises to the lysosome. It carries out the reaction Exonucleolytic cleavage in the 5'- to 3'-direction to yield nucleoside 3'-phosphates.. It catalyses the reaction a 5'-end 5'-dephospho-ribonucleotidyl-ribonucleotide-RNA + H2O = a ribonucleoside 3'-phosphate + a 5'-end dephospho-ribonucleoside-RNA + H(+). The enzyme catalyses a ribonucleoside 3'-phosphate-2'-3'-cyclophospho-GMP + H2O = a ribonucleoside 3'-phosphate + 2',3'-cyclophospho-GMP + H(+). The catalysed reaction is a 5'-end 5'-dephospho-2'-deoxyribonucleotidyl-2'-deoxyribonucleotide in single-stranded DNA + H2O = a 5'-end dephospho-2'-deoxyribonucleoside in single-stranded DNA + a 2'-deoxyribonucleoside 3'-phosphate + H(+). It carries out the reaction a 5'-end 5'-phospho-2'-deoxyribonucleotide in single-stranded DNA + H2O = a 5'-end 5'-dephospho-2'-deoxyribonucleotide in single-stranded DNA + phosphate. It catalyses the reaction a 3-lyso-sn-glycero-1-phospho-(3'-acyl-1'-sn-glycerol) + a 1-acyl-sn-glycerol = a 3-acyl-sn-glycero-1-phospho-(3'-acyl-1'-sn-glycerol) + glycerol. The enzyme catalyses 3-lyso-sn-glycero-1-phospho-(3'-(9Z-octadecenoyl)-1'-sn-glycerol) + 1-(9Z-octadecenoyl)-sn-glycerol = 3-(9Z-octadecenoyl)-sn-glycero-1-phospho-(3'-(9Z-octadecenoyl)-1'-sn-glycerol) + glycerol. With respect to regulation, the exonuclease activity toward ssDNA substrate is Ca(2+) and Mg(2+)-independent, but it is inhibited by Fe(2+), Cu(2+) and to a lesser extent Zn(2+) ions. In terms of biological role, 5'-&gt;3' exonuclease that hydrolyzes the phosphodiester bond of single-stranded DNA (ssDNA) and RNA molecules to form nucleoside 3'-monophosphates and 5'-end 5'-hydroxy deoxyribonucleotide/ribonucleotide fragments. Partially redundant with PLD3, can cleave all four nucleotides displaying higher efficiency for ssDNA and RNA fragments initiated with uridine and guanosine residues and lower efficiency for cytidine-initiated substrates. As a result, it does not always degrade polynucleotides to the single nucleotide level, it can stall at specific sites sparing certain fragments from exonucleolytic degradation. Processes self and pathogenic ssDNA and RNA molecules that reach the endolysosomal compartment via phagocytosis or autophagy and may serve as 'danger' signals for recognition by innate immune receptors such as toll-like receptors (TLRs). Degrades mitochondrial CpG-rich ssDNA fragments to prevent TLR9 activation and autoinflammatory response, but it can cleave viral RNA to generate ligands for TLR7 activation and initiate antiviral immune responses. In plasmacytoid dendritic cells, it cooperates with endonuclease RNASET2 to release 2',3'-cyclic guanosine monophosphate (2',3'-cGMP), a potent stimulatory ligand for TLR7. Produces 2',3'-cGMPs and cytidine-rich RNA fragments that occupy TLR7 ligand-binding pockets and trigger a signaling-competent state. Can exert polynucleotide phosphatase activity toward 5'-phosphorylated ssDNA substrates although at a slow rate. Transphosphatidylase that catalyzes the exchange with R to S stereo-inversion of the glycerol moiety between (S,R)-lysophosphatidylglycerol (LPG) and monoacylglycerol (MAG) substrates to yield (S,S)-bis(monoacylglycero)phosphate (BMP). Can synthesize a variety of (S,S)-BMPs representing the main phospholipid constituent of lysosomal intralumenal vesicle (ILV) membranes that bind acid hydrolases for lipid degradation. Regulates the homeostasis and interorganellar communication of the endolysosomal system with an overall impact on cellular removal of dysfunctional organelles via autophagy as well as proper protein and lipid turnover. May play a role in myotube formation in response to ER stress. In Homo sapiens (Human), this protein is 5'-3' exonuclease PLD4.